An 81-amino-acid chain; its full sequence is Cytochrome b559 subunit alpha (81 aa).

Residues 22-36 traverse the membrane as a helical segment; that stretch reads VIHSITIPSLFIAGW. Residue histidine 24 participates in heme binding.

The protein belongs to the PsbE/PsbF family. Heterodimer of an alpha subunit and a beta subunit. PSII is composed of 1 copy each of membrane proteins PsbA, PsbB, PsbC, PsbD, PsbE, PsbF, PsbH, PsbI, PsbJ, PsbK, PsbL, PsbM, PsbT, PsbX, PsbY, PsbZ, Psb30/Ycf12, at least 3 peripheral proteins of the oxygen-evolving complex and a large number of cofactors. It forms dimeric complexes. Requires heme b as cofactor.

The protein resides in the plastid. It localises to the chloroplast thylakoid membrane. Its function is as follows. This b-type cytochrome is tightly associated with the reaction center of photosystem II (PSII). PSII is a light-driven water:plastoquinone oxidoreductase that uses light energy to abstract electrons from H(2)O, generating O(2) and a proton gradient subsequently used for ATP formation. It consists of a core antenna complex that captures photons, and an electron transfer chain that converts photonic excitation into a charge separation. The polypeptide is Cytochrome b559 subunit alpha (Cyanidioschyzon merolae (strain NIES-3377 / 10D) (Unicellular red alga)).